The following is a 294-amino-acid chain: Cytidine deaminase (294 aa).

2 CMP/dCMP-type deaminase domains span residues 48–168 and 187–294; these read NDDE…FGPK and DNTS…RVTL. 89–91 is a substrate binding site; it reads NME. H102 lines the Zn(2+) pocket. E104 acts as the Proton donor in catalysis. Positions 129 and 132 each coordinate Zn(2+).

Belongs to the cytidine and deoxycytidylate deaminase family. Homodimer. Requires Zn(2+) as cofactor.

It catalyses the reaction cytidine + H2O + H(+) = uridine + NH4(+). The enzyme catalyses 2'-deoxycytidine + H2O + H(+) = 2'-deoxyuridine + NH4(+). Functionally, this enzyme scavenges exogenous and endogenous cytidine and 2'-deoxycytidine for UMP synthesis. This chain is Cytidine deaminase, found in Proteus mirabilis (strain HI4320).